Consider the following 1323-residue polypeptide: Glutamate receptor ionotropic, NMDA 2D (1323 aa).

Residues 1 to 27 (MRGAGGPRGPRGPAKMLLLLALACASP) form the signal peptide. Over 28-579 (FPEEVPGPGA…SPSAFLEPYS (552 aa)) the chain is Extracellular. N-linked (GlcNAc...) asparagine glycosylation is present at asparagine 89. Cysteine 101 and cysteine 345 are oxidised to a cystine. N-linked (GlcNAc...) asparagine glycosylation is found at asparagine 349, asparagine 363, asparagine 381, and asparagine 464. Disulfide bonds link cysteine 452–cysteine 480 and cysteine 459–cysteine 481. Residues serine 536, threonine 538, and arginine 543 each contribute to the L-glutamate site. A glycan (N-linked (GlcNAc...) asparagine) is linked at asparagine 566. The helical transmembrane segment at 580-601 (PAVWVMMFVMCLTVVAVTVFIF) threads the bilayer. Over 602 to 626 (EYLSPVGYNRSLATGKRPGGSTFTI) the chain is Cytoplasmic. Positions 627–638 (GKSIWLLWALVF) form an intramembrane region, discontinuously helical. The interval 628-647 (KSIWLLWALVFNNSVPVENP) is pore-forming. Topologically, residues 639–650 (NNSVPVENPRGT) are cytoplasmic. The chain crosses the membrane as a helical span at residues 651-671 (TSKIMVLVWAFFAVIFLASYT). The Extracellular segment spans residues 672-840 (ANLAAFMIQE…EVMSSKLDID (169 aa)). Residue asparagine 712 is glycosylated (N-linked (GlcNAc...) asparagine). L-glutamate is bound by residues serine 714, threonine 715, and aspartate 756. Cysteine 770 and cysteine 825 are joined by a disulfide. A helical transmembrane segment spans residues 841–864 (NMAGVFYMLLVAMGLSLLVFAWEH). The Cytoplasmic portion of the chain corresponds to 865-1323 (LVYWRLRHCL…AHFSSLESEV (459 aa)). 3 disordered regions span residues 897 to 952 (EAAP…PGGA), 977 to 1112 (AAPR…SLGG), and 1201 to 1323 (PWAA…ESEV). A compositionally biased stretch (pro residues) spans 899–929 (APPPAKPPPPPQPLPSPAYPAARPPPGPAPF). Positions 931–940 (PRERAAADRW) are enriched in basic and acidic residues. The span at 977 to 986 (AAPRGAAGRP) shows a compositional bias: low complexity. Over residues 987–1001 (LSPPTTQPPQKPPPS) the composition is skewed to pro residues. A compositionally biased stretch (low complexity) spans 1030-1039 (AAAAAAVGPP). Over residues 1080–1092 (TAPPPRRAAPPPC) the composition is skewed to pro residues. The segment covering 1208–1228 (PRRRARCGCPRPHPHRPRASH) has biased composition (basic residues). Arginine 1303 is modified (omega-N-methylarginine). Position 1313 is a phosphoserine (serine 1313). The short motif at 1321 to 1323 (SEV) is the PDZ-binding element.

Belongs to the glutamate-gated ion channel (TC 1.A.10.1) family. NR2D/GRIN2D subfamily. Heterotetramer. Forms heterotetrameric channels composed of two GluN1/zeta subunits (GRIN1), and two identical GluN2/epsilon subunits (GRIN2A, GRIN2B, GRIN2C or GRIN2D) or GluN3 subunits (GRIN3A or GRIN3B) (in vitro). In vivo, the subunit composition may depend on the expression levels of the different subunits. Interacts with PDZ domains of PATJ and DLG4. Expressed in brain, mainly in the subcortical region.

The protein resides in the cell membrane. Its subcellular location is the postsynaptic cell membrane. It carries out the reaction Ca(2+)(in) = Ca(2+)(out). The enzyme catalyses Na(+)(in) = Na(+)(out). It catalyses the reaction K(+)(in) = K(+)(out). Functionally, component of N-methyl-D-aspartate (NMDA) receptors (NMDARs) that function as heterotetrameric, ligand-gated cation channels with high calcium permeability and voltage-dependent block by Mg(2+). Participates in synaptic plasticity for learning and memory formation. Channel activation requires binding of the neurotransmitter L-glutamate to the GluN2 subunit, glycine or D-serine binding to the GluN1 subunit, plus membrane depolarization to eliminate channel inhibition by Mg(2+). NMDARs mediate simultaneously the potasium efflux and the influx of calcium and sodium. Each GluN2 subunit confers differential attributes to channel properties, including activation, deactivation and desensitization kinetics, pH sensitivity, Ca2(+) permeability, and binding to allosteric modulators. This Rattus norvegicus (Rat) protein is Glutamate receptor ionotropic, NMDA 2D.